We begin with the raw amino-acid sequence, 1619 residues long: ATP-dependent helicase ULS1 (1619 aa).

The short motif at 7 to 10 (IDLT) is the SUMO interacting motif; type a 1 element. Positions 86 to 102 (STFNNEKSSNEVKQQQV) are enriched in polar residues. Disordered stretches follow at residues 86–123 (STFN…SSPS), 200–279 (NNKP…VESS), 347–371 (PILP…NSSI), and 429–450 (SGSN…SVLQ). The span at 103-118 (LKEETMGSSNDEKKTQ) shows a compositional bias: basic and acidic residues. Serine 121 is modified (phosphoserine). Residues 200–210 (NNKPSQQQFSD) show a composition bias toward polar residues. Over residues 211 to 226 (PETKDNSLKSENKDQI) the composition is skewed to basic and acidic residues. Polar residues-rich tracts occupy residues 242–259 (SAFQ…TIPN) and 269–279 (LPSNLSSVESS). The span at 353 to 366 (NMDHTTHNSHDSEQ) shows a compositional bias: basic and acidic residues. An SUMO interacting motif; type b 1 motif is present at residues 371 to 378 (IIILSDED). Residues 470-473 (LDTL) carry the SUMO interacting motif; type a 2 motif. The SUMO interacting motif; type b 2 motif lies at 543 to 550 (ILVDEAEN). The region spanning 956–1157 (QVENSAKKGG…YSLIRFLRIP (202 aa)) is the Helicase ATP-binding domain. Position 969-976 (969-976 (DDMGLGKT)) interacts with ATP. The segment at 1330 to 1386 (CFWCMEQLEPEAMSVLTGCGHLICDTCIEPFIEESSMLPQAKKTKGGAFAIPCKDCQ) adopts an RING-type zinc-finger fold. The Helicase C-terminal domain occupies 1447–1606 (QCIQVIQRVF…GKIKEVNSLG (160 aa)).

It belongs to the SNF2/RAD54 helicase family. In terms of assembly, interacts with CDC3, CDC11, EBP2, SIR4, UBC4 and SUMO/SMT3.

It localises to the nucleus. Its function is as follows. ATP-dependent helicase involved mating type switching and in silencing interference through its interaction with the silencing regulator SIR4. Cooperates with UBC4 and UBC5 to mediate ubiquitination of SUMO conjugates. The sequence is that of ATP-dependent helicase ULS1 (ULS1) from Saccharomyces cerevisiae (strain ATCC 204508 / S288c) (Baker's yeast).